Here is a 707-residue protein sequence, read N- to C-terminus: Polyribonucleotide nucleotidyltransferase (707 aa).

2 residues coordinate Mg(2+): aspartate 487 and aspartate 493. One can recognise a KH domain in the interval 554 to 613; that stretch reads PSMATIKIDPDKIRDVIGKGGATIRKICDDTGASIDLDDDGTVRIYAEDKTAAKAAIDTV. An S1 motif domain is found at 623–691; it reads GKLYRGTVAR…NRNRVKLSIK (69 aa).

It belongs to the polyribonucleotide nucleotidyltransferase family. Component of the RNA degradosome, which is a multiprotein complex involved in RNA processing and mRNA degradation. Mg(2+) is required as a cofactor.

Its subcellular location is the cytoplasm. It catalyses the reaction RNA(n+1) + phosphate = RNA(n) + a ribonucleoside 5'-diphosphate. Involved in mRNA degradation. Catalyzes the phosphorolysis of single-stranded polyribonucleotides processively in the 3'- to 5'-direction. This is Polyribonucleotide nucleotidyltransferase from Chromohalobacter salexigens (strain ATCC BAA-138 / DSM 3043 / CIP 106854 / NCIMB 13768 / 1H11).